The chain runs to 365 residues: Outer membrane lipoprotein A (365 aa).

The first 19 residues, 1–19 (MNIATKLMASLVASVVLTA), serve as a signal peptide directing secretion. The segment at 19–121 (ACSGGGSSGS…KGEELSKDKS (103 aa)) is disordered. A lipid anchor (N-palmitoyl cysteine) is attached at cysteine 20. Cysteine 20 carries the S-diacylglycerol cysteine lipid modification. 2 stretches are compositionally biased toward basic and acidic residues: residues 48–68 (EQPKKEEVPQADNSKAEEPKE) and 105–121 (NPQKDAPKGEELSKDKS).

It is found in the cell outer membrane. This chain is Outer membrane lipoprotein A (omlA), found in Actinobacillus pleuropneumoniae (Haemophilus pleuropneumoniae).